The primary structure comprises 434 residues: Alpha-enolase (434 aa).

An N-acetylserine modification is found at serine 2. Residue lysine 5 is modified to N6-acetyllysine. Position 27 is a phosphoserine (serine 27). Position 40 (serine 40) interacts with Mg(2+). Phosphotyrosine is present on tyrosine 44. Lysine 60 is modified (N6-acetyllysine; alternate). Lysine 60 carries the post-translational modification N6-succinyllysine; alternate. Lysine 64 and lysine 71 each carry N6-acetyllysine. Lysine 89 carries the post-translational modification N6-acetyllysine; alternate. At lysine 89 the chain carries N6-succinyllysine; alternate. An N6-acetyllysine mark is found at lysine 92 and lysine 126. Residues histidine 158 and glutamate 167 each coordinate substrate. Residues lysine 193 and lysine 199 each carry the N6-acetyllysine modification. Position 202 is an N6-acetyllysine; alternate (lysine 202). Lysine 202 participates in a covalent cross-link: Glycyl lysine isopeptide (Lys-Gly) (interchain with G-Cter in SUMO2); alternate. Glutamate 210 serves as the catalytic Proton donor. N6-acetyllysine; alternate is present on residues lysine 228 and lysine 233. At lysine 228 the chain carries N6-succinyllysine; alternate. At lysine 228 the chain carries N6-(2-hydroxyisobutyryl)lysine; alternate. Residue lysine 233 is modified to N6-malonyllysine; alternate. Aspartate 245 lines the Mg(2+) pocket. Phosphoserine is present on serine 254. Lysine 256 carries the post-translational modification N6-acetyllysine. Residues serine 263 and serine 272 each carry the phosphoserine modification. Lysine 281 is modified (N6-acetyllysine; alternate). Residue lysine 281 is modified to N6-(2-hydroxyisobutyryl)lysine; alternate. Residue lysine 285 is modified to N6-acetyllysine. Phosphotyrosine is present on tyrosine 287. At serine 291 the chain carries Phosphoserine. Mg(2+) is bound by residues glutamate 293 and aspartate 318. Positions 293 and 318 each coordinate substrate. Residues lysine 335 and lysine 343 each carry the N6-acetyllysine modification. The active-site Proton acceptor is lysine 343. Residues 370–373 (SHRS) and lysine 394 each bind substrate. Positions 405 to 434 (AKYNQLLRIEEELGSKAKFAGRNFRNPLAK) are required for interaction with PLG. Lysine 406 carries the N6-acetyllysine modification. Residue lysine 420 is modified to N6-acetyllysine; alternate. The residue at position 420 (lysine 420) is an N6-succinyllysine; alternate. Lysine 420 carries the N6-malonyllysine; alternate modification.

Belongs to the enolase family. As to quaternary structure, mammalian enolase is composed of 3 isozyme subunits, alpha, beta and gamma, which can form homodimers or heterodimers which are cell-type and development-specific. ENO1 interacts with PLG in the neuronal plasma membrane and promotes its activation. The C-terminal lysine is required for this binding. Interacts with ENO4 and PGAM2. Interacts with CMTM6. The cofactor is Mg(2+). Post-translationally, ISGylated. Lysine 2-hydroxyisobutyrylation (Khib) by p300/EP300 activates the phosphopyruvate hydratase activity.

The protein resides in the cytoplasm. It is found in the cell membrane. The enzyme catalyses (2R)-2-phosphoglycerate = phosphoenolpyruvate + H2O. It participates in carbohydrate degradation; glycolysis; pyruvate from D-glyceraldehyde 3-phosphate: step 4/5. Glycolytic enzyme the catalyzes the conversion of 2-phosphoglycerate to phosphoenolpyruvate. In addition to glycolysis, involved in various processes such as growth control, hypoxia tolerance and allergic responses. May also function in the intravascular and pericellular fibrinolytic system due to its ability to serve as a receptor and activator of plasminogen on the cell surface of several cell-types such as leukocytes and neurons. Stimulates immunoglobulin production. This Pongo abelii (Sumatran orangutan) protein is Alpha-enolase (ENO1).